Here is a 347-residue protein sequence, read N- to C-terminus: METPFYGDEALSGLGGGGSSSGGGGSFASPGRLFPGAPPTAAPGSMMKKDALTLSLSEQVAAALKPAAAPPPGPLRTDGAPGTAPPDGLLASPELGLLKLASPELERLIIQSNGLVTTTPTSTQFLYPKVAASEEQEFAEGFVKALEDLHKQNQLSAGAASAAAAAGGPSGTAAGAAPPSELAPAAATPEAPVYANLSSYAGGTGSAGGAATVAFAAEPVPFPPPPPPGTLGPPRLAALKDEPQTVPDVPSFGESPPLSPIDMDTQERIKAERKRLRNRIAASKCRKRKLERISRLEEKVKTLKSQNTELASTASLLREQVAQLKQKVLSHVNSGCQLLPQHQVPAY.

The tract at residues M1–M46 is disordered. Over residues G13 to S26 the composition is skewed to gly residues. Positions S29 to A41 match the Menin-binding motif (MBM) motif. Residues K48–S57 carry the MAP kinase docking motif; essential for its phosphorylation motif. The interval A63 to A91 is disordered. S92 carries the phosphoserine modification. S102 carries the phosphoserine; by MAPK8 modification. T119 carries the post-translational modification Phosphothreonine. 2 disordered regions span residues A164–A183 and E218–D264. Pro residues predominate over residues V220–L231. 3 positions are modified to phosphoserine: S251, S255, and S259. The tract at residues R268–R295 is basic motif. The bZIP domain maps to R268–H331. A leucine-zipper region spans residues L296 to L324.

This sequence belongs to the bZIP family. Jun subfamily. As to quaternary structure, heterodimer; binds DNA as a heterodimer. Component of an AP-1 transcription factor complex composed of JUN-FOS heterodimers. As part of the AP-1 transcription factor complex, forms heterodimers with FOS proteins, thereby binding to the AP-1 consensus sequence and stimulating transcription. Forms heterodimers with FOSB; thereby binding to the AP-1 consensus sequence. Interacts (via MBM motif) with MEN1; this interaction represses transcriptional activation. Interacts with MAPK10; this interaction is inhibited in the presence of MEN1. Post-translationally, phosphorylated by MAP kinases MAPK8 and MAPK10; phosphorylation is inhibited in the presence of MEN1.

The protein localises to the nucleus. Transcription factor binding AP-1 sites. Heterodimerizes with proteins of the FOS family to form an AP-1 transcription factor complex, thereby enhancing their DNA binding activity to an AP-1 consensus sequence 3'-TGA[GC]TCA-5' and enhancing their transcriptional activity. The chain is Transcription factor JunD (JUND) from Bos taurus (Bovine).